A 337-amino-acid chain; its full sequence is Heme A synthase (337 aa).

The next 5 helical transmembrane spans lie at 6–26, 87–107, 119–139, 154–174, and 192–212; these read ITKWLCINCIMVIATIVIGGI, FIHRLLGRITALIYIVPVIYF, LPYIIALLLFCVQGFIGWYMV, LAFHLIIAVIIYHILFYQLIK, and LIFSGIAITVVYVQIFLGALV. Heme is bound at residue His-256. A run of 3 helical transmembrane segments spans residues 258–278, 285–305, and 308–328; these read LVGYSVFLVVVVLIICLLKIE, IAYFLMIALFMQVSTGIITLL, and VPIIIASIHQLFAIILLSVII. His-316 contacts heme.

The protein belongs to the COX15/CtaA family. Type 2 subfamily. Interacts with CtaB. It depends on heme b as a cofactor.

It localises to the cell membrane. The catalysed reaction is Fe(II)-heme o + 2 A + H2O = Fe(II)-heme a + 2 AH2. It functions in the pathway porphyrin-containing compound metabolism; heme A biosynthesis; heme A from heme O: step 1/1. Catalyzes the conversion of heme O to heme A by two successive hydroxylations of the methyl group at C8. The first hydroxylation forms heme I, the second hydroxylation results in an unstable dihydroxymethyl group, which spontaneously dehydrates, resulting in the formyl group of heme A. The protein is Heme A synthase of Rickettsia rickettsii (strain Iowa).